Here is a 292-residue protein sequence, read N- to C-terminus: Histamine N-methyltransferase (292 aa).

Glutamate 28 contributes to the substrate binding site. S-adenosyl-L-methionine contacts are provided by glycine 60, glutamate 89, glutamine 94, serine 120, and isoleucine 142. Residue asparagine 283 coordinates substrate.

This sequence belongs to the class I-like SAM-binding methyltransferase superfamily. HNMT family. In terms of assembly, monomer. In terms of tissue distribution, expressed in jejunum, brain &gt; lung, spleen, stomach &gt; liver, kidney.

The protein resides in the cytoplasm. The enzyme catalyses histamine + S-adenosyl-L-methionine = N(tau)-methylhistamine + S-adenosyl-L-homocysteine + H(+). In terms of biological role, inactivates histamine by N-methylation. Plays an important role in degrading histamine and in regulating the airway response to histamine. This is Histamine N-methyltransferase (HNMT) from Cavia porcellus (Guinea pig).